A 662-amino-acid chain; its full sequence is Interferon-induced GTP-binding protein Mx1 (662 aa).

Residue M1 is modified to N-acetylmethionine; in Interferon-induced GTP-binding protein Mx1; alternate. The Dynamin-type G domain maps to 67–340; the sequence is DLALPAIAVI…LITHICKSLP (274 aa). The G1 motif stretch occupies residues 77–84; that stretch reads GDQSSGKS. 77–84 is a GTP binding site; that stretch reads GDQSSGKS. A G2 motif region spans residues 102 to 104; it reads VTR. A G3 motif region spans residues 178–181; that stretch reads DLPG. GTP-binding positions include 178-182 and 247-250; these read DLPGI and TKPD. The G4 motif stretch occupies residues 247–250; the sequence is TKPD. Positions 279-282 are G5 motif; sequence KCRG. A bundle signaling element (BSE) region spans residues 341–366; that stretch reads LLENQIKETHQRITEELQKYGVDIPE. The segment at 366–533 is middle domain; that stretch reads EDENEKMFFL…HFQMEQIVYC (168 aa). The tract at residues 367–632 is stalk; it reads DENEKMFFLI…KDTYSWLLKE (266 aa). Positions 554–557 are critical for lipid-binding; sequence KKKK. Positions 574–662 constitute a GED domain; that stretch reads MEEIFQHLMA…ARRRLAQFPG (89 aa).

It belongs to the TRAFAC class dynamin-like GTPase superfamily. Dynamin/Fzo/YdjA family. Homotetramer. Oligomerizes into multimeric filamentous or ring-like structures by virtue of its stalk domain. Oligomerization is critical for GTPase activity, protein stability, and recognition of viral target structures. Interacts with TRPC1, TRPC3, TRPC4, TRPC5, TRPC6 and TRPC7. Interacts with HSPA5. Interacts with DDX39A and DDX39B. Interacts with TUBB/TUBB5. The GTP-bound form interacts (via C-terminus) with THOV P5 protein. The GTP-bound form interacts with LACV protein N. Interacts with CCHFV protein N. In terms of processing, ISGylated.

Its subcellular location is the cytoplasm. The protein resides in the endoplasmic reticulum membrane. It localises to the perinuclear region. It is found in the nucleus. Its function is as follows. Interferon-induced dynamin-like GTPase with antiviral activity against a wide range of RNA viruses and some DNA viruses. Its target viruses include negative-stranded RNA viruses and HBV through binding and inactivation of their ribonucleocapsid. May also antagonize reoviridae and asfarviridae replication. Inhibits thogoto virus (THOV) replication by preventing the nuclear import of viral nucleocapsids. Inhibits La Crosse virus (LACV) replication by sequestering viral nucleoprotein in perinuclear complexes, preventing genome amplification, budding, and egress. Inhibits influenza A virus (IAV) replication by decreasing or delaying NP synthesis and by blocking endocytic traffic of incoming virus particles. Enhances ER stress-mediated cell death after influenza virus infection. May regulate the calcium channel activity of TRPCs. The sequence is that of Interferon-induced GTP-binding protein Mx1 (MX1) from Homo sapiens (Human).